A 203-amino-acid polypeptide reads, in one-letter code: dITP/XTP pyrophosphatase (203 aa).

8–13 (TANKGK) is a substrate binding site. Mg(2+)-binding residues include Glu41 and Asp70. Catalysis depends on Asp70, which acts as the Proton acceptor. Substrate contacts are provided by residues Ser71, 153-156 (FGYD), Lys176, and 181-182 (HR).

The protein belongs to the HAM1 NTPase family. As to quaternary structure, homodimer. The cofactor is Mg(2+).

The enzyme catalyses XTP + H2O = XMP + diphosphate + H(+). The catalysed reaction is dITP + H2O = dIMP + diphosphate + H(+). It carries out the reaction ITP + H2O = IMP + diphosphate + H(+). Functionally, pyrophosphatase that catalyzes the hydrolysis of nucleoside triphosphates to their monophosphate derivatives, with a high preference for the non-canonical purine nucleotides XTP (xanthosine triphosphate), dITP (deoxyinosine triphosphate) and ITP. Seems to function as a house-cleaning enzyme that removes non-canonical purine nucleotides from the nucleotide pool, thus preventing their incorporation into DNA/RNA and avoiding chromosomal lesions. The protein is dITP/XTP pyrophosphatase of Listeria innocua serovar 6a (strain ATCC BAA-680 / CLIP 11262).